Here is a 358-residue protein sequence, read N- to C-terminus: Probable butyrate kinase (358 aa).

It belongs to the acetokinase family.

The protein resides in the cytoplasm. It catalyses the reaction butanoate + ATP = butanoyl phosphate + ADP. This chain is Probable butyrate kinase, found in Oceanobacillus iheyensis (strain DSM 14371 / CIP 107618 / JCM 11309 / KCTC 3954 / HTE831).